The following is a 569-amino-acid chain: Protein GPR108 (569 aa).

The N-terminal stretch at methionine 1–glycine 34 is a signal peptide. Residues asparagine 59, asparagine 111, and asparagine 182 are each glycosylated (N-linked (GlcNAc...) asparagine). A disordered region spans residues leucine 144 to valine 219. Positions lysine 180–lysine 192 are enriched in polar residues. Residues threonine 194 to glutamate 203 show a composition bias toward basic and acidic residues. Residues asparagine 226 and asparagine 230 are each glycosylated (N-linked (GlcNAc...) asparagine). 7 helical membrane-spanning segments follow: residues leucine 289–cysteine 309, isoleucine 318–isoleucine 338, leucine 362–valine 382, isoleucine 393–serine 413, isoleucine 427–isoleucine 447, valine 475–valine 495, and tryptophan 499–glycine 519.

The protein belongs to the LU7TM family. In terms of tissue distribution, high expression in spleen, lung, stomach, large and small intestine, and thymus.

Its subcellular location is the golgi apparatus. The protein localises to the cis-Golgi network membrane. The protein resides in the trans-Golgi network membrane. It is found in the golgi apparatus membrane. May play a role in intracellular immune modulation by activating NF-kappaB response and attenuating Toll-like-receptor response. Functionally, (Microbial infection) Plays an essential function in adeno-associated virus (AAV) transduction, across multiple serotypes except AAV5. May play a critical role in mediating the endosomal virus escape or in the AAV virions trafficking from endosomes to the nucleus. The polypeptide is Protein GPR108 (Gpr108) (Mus musculus (Mouse)).